The primary structure comprises 261 residues: RING finger protein 208 (261 aa).

A disordered region spans residues 83–106 (PALEGAPHTPPLPRRPRKGSSELG). Ser-102 is modified (phosphoserine). The RING-type zinc-finger motif lies at 143-190 (CPTCGHSYNVTQRRPRVLSCLHSVCEQCLQILYESCPKYKFISCPTCR).

This is RING finger protein 208 (RNF208) from Homo sapiens (Human).